The primary structure comprises 256 residues: MRAQPVISYEYPLNERIRTLLRLEDLYAKIAHFLGGDAPQDHHVALLTLFEVLEVAGRADLKVDLVQELERQRQILISFRHNPEISEQALSGALYEIEQASSSLLAMAGKIGQYLRENEWLMAIRSRASIPGGVCQFDLPSYHYWLNRDPEQRRGDLEGWLRPMIPIREGLTIVLRLLRASAQPERQLARGGTYQLTMGGRGAQMLQLRLAPAEAVVPEISANKYAINIRFMLSETVVRPRLAERDIPFEITFCSL.

It belongs to the ZapD family. Interacts with FtsZ.

The protein resides in the cytoplasm. Functionally, cell division factor that enhances FtsZ-ring assembly. Directly interacts with FtsZ and promotes bundling of FtsZ protofilaments, with a reduction in FtsZ GTPase activity. This Aromatoleum aromaticum (strain DSM 19018 / LMG 30748 / EbN1) (Azoarcus sp. (strain EbN1)) protein is Cell division protein ZapD.